We begin with the raw amino-acid sequence, 2590 residues long: 5-methylorsellinic acid synthase (2590 aa).

Residues 6–255 form an N-terminal acylcarrier protein transacylase domain (SAT) region; the sequence is LLCGSQAIQW…HNQVNRELFA (250 aa). Positions 369 to 784 constitute a Ketosynthase family 3 (KS3) domain; it reads GDSIAIVGMG…GSNAALIVTQ (416 aa). Residues Cys534, His669, and His707 each act as for beta-ketoacyl synthase activity in the active site. The tract at residues 891 to 1191 is malonyl-CoA:ACP transacylase (MAT) domain; the sequence is LAFGGQTGNV…HAVNLGGPEP (301 aa). Ser978 acts as the For acyl/malonyl transferase activity in catalysis. The interval 1263–1393 is N-terminal hotdog fold; that stretch reads PKLVSFVKYL…GTVNISSLTS (131 aa). One can recognise a PKS/mFAS DH domain in the interval 1263–1569; it reads PKLVSFVKYL…FAKVPTASLK (307 aa). The segment at 1267–1568 is product template (PT) domain; sequence SFVKYLDSNR…RFAKVPTASL (302 aa). His1297 (proton acceptor; for dehydratase activity) is an active-site residue. Residues 1421 to 1569 form a C-terminal hotdog fold region; it reads TSAIQGSLVY…FAKVPTASLK (149 aa). Residue Asp1481 is the Proton donor; for dehydratase activity of the active site. The disordered stretch occupies residues 1587 to 1612; the sequence is LKVTEPSANVPKAQPVSTYPKPMKPA. Carrier domains lie at 1617–1691 and 1736–1812; these read AQIR…ASGT and SAQA…IPKP. 2 positions are modified to O-(pantetheine 4'-phosphoryl)serine: Ser1651 and Ser1772. The methyltransferase (CMeT) domain stretch occupies residues 1980–2212; sequence QHRGEHKLLN…GFRHVDWSDD (233 aa). The thioesterase (TE) domain stretch occupies residues 2282 to 2590; it reads LMIHGGGHIM…EGYEFLLRHL (309 aa).

The catalysed reaction is 3 malonyl-CoA + acetyl-CoA + S-adenosyl-L-methionine + H(+) = 5-methylorsellinate + S-adenosyl-L-homocysteine + 3 CO2 + 4 CoA. Its pathway is secondary metabolite biosynthesis. Its function is as follows. Non-reducing polyketide synthase; part of the cluster A that mediates the biosynthesis of azasperpyranones, members of the azaphilone family that exhibit anti-cancer activities. Azasperpyranones are synthesized by 2 clusters, A and B. Cluster A is responsible for the production of the polyhydric phenol moiety while the azaphilonoid scaffold is produced by the cluster B. The non-reducing polyketide synthase ATEG_03629 produces 5-methyl orsellinic acid, which is then reduced to 5-methyl orsellinic aldehyde by the NRPS-like protein ATEG_03630. 5-methyl orsellinic aldehyde is then first hydroxylated by the FAD-dependent monooxygenase ATEG_03635 and subsequently hydroxylated by the cytochrome P450 monooxygenase ATEG_03631 to produce the unstable polyhydric phenol precursor of azasperpyranones. On the other hand, the polyketide synthase ATEG_07659 is responsible for producing the 3,5-dimethyloctadienone moiety from acetyl-CoA, three malonyl-CoA, and two S-adenosyl methionines (SAM). The 3,5-dimethyloctadienone moiety is then loaded onto the SAT domain of ATEG_07661 and extended with four malonyl-CoA and one SAM, which leads to the formation of 2,4-dihydroxy-6-(5,7-dimethyl-2-oxo-trans-3-trans-5-nonadienyl)-3-methylbenzaldehyde (compound 8) after reductive release and aldol condensation. The FAD-dependent monooxygenase ATEG_07662 is the next enzyme in the biosynthesis sequence and hydroxylates the side chain at the benzylic position of compound 8. In Aspergillus nidulans, afoF, the ortholog of the FAD-dependent oxygenase ATEG_07660, is the key enzyme for the biosynthesis of asperfuranone by catalyzing the hydroxylation at C-8 of to prevent the formation of a six-membered ring hemiacetal intermediate and thus facilitating the formation of a five-membered ring to produce asperfuranone. In Aspergillus terreus, ATEG_07660 is probably not functional, which leads to the formation of the six-membered ring hemiacetal intermediate presperpyranone instead of asperfuranone. Finally, ATEG_03636 is involved in the condensation of the polyhydric phenol moiety produced by cluster A and the perasperpyranone precursor produced by cluster B, to yield azasperpyranone A. Further modifications of azasperpyranone A result in the production of derivatives, including azasperpyranone B to F. The chain is 5-methylorsellinic acid synthase from Aspergillus terreus (strain NIH 2624 / FGSC A1156).